A 1407-amino-acid polypeptide reads, in one-letter code: DNA-directed RNA polymerase subunit beta' (1407 aa).

Residues Cys-70, Cys-72, Cys-85, and Cys-88 each contribute to the Zn(2+) site. Positions 460, 462, and 464 each coordinate Mg(2+). Zn(2+) contacts are provided by Cys-814, Cys-888, Cys-895, and Cys-898.

Belongs to the RNA polymerase beta' chain family. The RNAP catalytic core consists of 2 alpha, 1 beta, 1 beta' and 1 omega subunit. When a sigma factor is associated with the core the holoenzyme is formed, which can initiate transcription. Mg(2+) is required as a cofactor. Zn(2+) serves as cofactor.

It carries out the reaction RNA(n) + a ribonucleoside 5'-triphosphate = RNA(n+1) + diphosphate. Its function is as follows. DNA-dependent RNA polymerase catalyzes the transcription of DNA into RNA using the four ribonucleoside triphosphates as substrates. This Cellvibrio japonicus (strain Ueda107) (Pseudomonas fluorescens subsp. cellulosa) protein is DNA-directed RNA polymerase subunit beta'.